The following is a 432-amino-acid chain: 3-phosphoshikimate 1-carboxyvinyltransferase (432 aa).

Lysine 23, serine 24, and arginine 28 together coordinate 3-phosphoshikimate. A phosphoenolpyruvate-binding site is contributed by lysine 23. Residues glycine 95 and arginine 123 each coordinate phosphoenolpyruvate. 3-phosphoshikimate contacts are provided by serine 167, glutamine 169, aspartate 317, and lysine 344. A phosphoenolpyruvate-binding site is contributed by glutamine 169. Aspartate 317 serves as the catalytic Proton acceptor. 2 residues coordinate phosphoenolpyruvate: arginine 348 and arginine 390.

The protein belongs to the EPSP synthase family. Monomer.

Its subcellular location is the cytoplasm. The catalysed reaction is 3-phosphoshikimate + phosphoenolpyruvate = 5-O-(1-carboxyvinyl)-3-phosphoshikimate + phosphate. Its pathway is metabolic intermediate biosynthesis; chorismate biosynthesis; chorismate from D-erythrose 4-phosphate and phosphoenolpyruvate: step 6/7. In terms of biological role, catalyzes the transfer of the enolpyruvyl moiety of phosphoenolpyruvate (PEP) to the 5-hydroxyl of shikimate-3-phosphate (S3P) to produce enolpyruvyl shikimate-3-phosphate and inorganic phosphate. In Staphylococcus aureus (strain MRSA252), this protein is 3-phosphoshikimate 1-carboxyvinyltransferase.